We begin with the raw amino-acid sequence, 336 residues long: Glyceraldehyde-3-phosphate dehydrogenase, plasmid (336 aa).

Residues 12–13 (RI), Asp-37, Arg-81, and Ser-123 each bind NAD(+). D-glyceraldehyde 3-phosphate contacts are provided by residues 154–156 (SCT) and Thr-185. Cys-155 serves as the catalytic Nucleophile. Asn-186 is a binding site for NAD(+). D-glyceraldehyde 3-phosphate is bound by residues Arg-200, 213–214 (TG), and Arg-236. Asn-317 is a binding site for NAD(+).

It belongs to the glyceraldehyde-3-phosphate dehydrogenase family. Homotetramer.

The enzyme catalyses D-glyceraldehyde 3-phosphate + phosphate + NAD(+) = (2R)-3-phospho-glyceroyl phosphate + NADH + H(+). It functions in the pathway carbohydrate biosynthesis; Calvin cycle. In terms of biological role, could be involved in carbon fixation as a component of the Calvin cycle. Catalyzes the oxidative phosphorylation of glyceraldehyde 3-phosphate (G3P) to 1,3-bisphosphoglycerate (BPG) using the cofactor NAD. The first reaction step involves the formation of a hemiacetal intermediate between G3P and a cysteine residue, and this hemiacetal intermediate is then oxidized to a thioester, with concomitant reduction of NAD to NADH. The reduced NADH is then exchanged with the second NAD, and the thioester is attacked by a nucleophilic inorganic phosphate to produce BPG. The chain is Glyceraldehyde-3-phosphate dehydrogenase, plasmid (cbbGP) from Cupriavidus necator (strain ATCC 17699 / DSM 428 / KCTC 22496 / NCIMB 10442 / H16 / Stanier 337) (Ralstonia eutropha).